An 88-amino-acid chain; its full sequence is RNA-binding protein Hfq (88 aa).

The Sm domain occupies 9 to 68 (DPFLNALRRERIPVSIYLVNGIKLQGQIESFDQFVILLKNTVNQMVYKHAISTVVPARAV). The disordered stretch occupies residues 66–88 (RAVSHHSASDRPQGERPQEKTEE). Residues 72–88 (SASDRPQGERPQEKTEE) are compositionally biased toward basic and acidic residues.

Belongs to the Hfq family. As to quaternary structure, homohexamer.

Its function is as follows. RNA chaperone that binds small regulatory RNA (sRNAs) and mRNAs to facilitate mRNA translational regulation in response to envelope stress, environmental stress and changes in metabolite concentrations. Also binds with high specificity to tRNAs. In Aliivibrio fischeri (strain ATCC 700601 / ES114) (Vibrio fischeri), this protein is RNA-binding protein Hfq.